Consider the following 739-residue polypeptide: MTLEMSPEQIQESKIYREWGLTDEEYLKIKDEILDGRLPNFTETGMYAVMWSEHCCYKNSKPVLKKFPTTGPQVLMGPGEGAGVVDIGDDLAVVFKAESHNHPSYVEPYEGAATGSGGIIRDIFSMGARPIAILDSLRFGPIDNGKTRHIVDQVTAGIAGYGNCIGIPTVGGEVAFDESYAGNPLVNVMCVGLIEHKHIQKGQAKGVGNSIFYVGAKTGRDGIHGASFASKEFGSGSETQRSAVQVGDPFMEKLLLEACIEVIQNHGDILVGIQDMGAAGLVSSTSEMASKAGSGLRLNLDNVPQRETEMIPYEMMLSESQERMVLCVKKGHEQEIIDLFKKYDLDAVNIGQVTDDGFYTLYHKGEMVAHVPVDSLAEDAPTYYREAKVPERIQKFTDSEKYLPEITDSAVSEIFKKLLAQPTIASKKSIYETYDSRVMTNTVVAPGSDSAVLRVRGTNKALAMTTDCNARYLYLDPEKGGAIAVAEAARNIVASGGKPLAITDCLNFGNPEKPEQFWELTTAADGISRSCLALDTPVISGNVSLYNETNGSAILPTPMIGMVGLIENVKNITTQEFKKAGDLIVLVGQTFDDFSGSELQKMLIGEISGRIDFDLETEKINQDFVLKAITDGLVSSAHDLAEGGLAIALAESAFANGLGVDVKVDITNAQLFSETQGRFILSISPENQATFEKLLTESSVSGEVIGKVTDSGILEMNELSISTDEAVSIYEGALPALMK.

His54 is a catalytic residue. Residues Tyr57 and Lys96 each contribute to the ATP site. Residue Glu98 coordinates Mg(2+). Residues 99–102 and Arg121 each bind substrate; that span reads SHNH. His100 (proton acceptor) is an active-site residue. Position 122 (Asp122) interacts with Mg(2+). Residue Gln245 participates in substrate binding. Residue Asp275 coordinates Mg(2+). 319 to 321 is a binding site for substrate; that stretch reads ESQ. ATP-binding residues include Asp504 and Gly541. Asn542 contributes to the Mg(2+) binding site. Ser544 is a binding site for substrate.

Belongs to the FGAMS family. Monomer. Part of the FGAM synthase complex composed of 1 PurL, 1 PurQ and 2 PurS subunits.

It is found in the cytoplasm. It catalyses the reaction N(2)-formyl-N(1)-(5-phospho-beta-D-ribosyl)glycinamide + L-glutamine + ATP + H2O = 2-formamido-N(1)-(5-O-phospho-beta-D-ribosyl)acetamidine + L-glutamate + ADP + phosphate + H(+). It participates in purine metabolism; IMP biosynthesis via de novo pathway; 5-amino-1-(5-phospho-D-ribosyl)imidazole from N(2)-formyl-N(1)-(5-phospho-D-ribosyl)glycinamide: step 1/2. In terms of biological role, part of the phosphoribosylformylglycinamidine synthase complex involved in the purines biosynthetic pathway. Catalyzes the ATP-dependent conversion of formylglycinamide ribonucleotide (FGAR) and glutamine to yield formylglycinamidine ribonucleotide (FGAM) and glutamate. The FGAM synthase complex is composed of three subunits. PurQ produces an ammonia molecule by converting glutamine to glutamate. PurL transfers the ammonia molecule to FGAR to form FGAM in an ATP-dependent manner. PurS interacts with PurQ and PurL and is thought to assist in the transfer of the ammonia molecule from PurQ to PurL. This Lactococcus lactis subsp. lactis (strain IL1403) (Streptococcus lactis) protein is Phosphoribosylformylglycinamidine synthase subunit PurL.